Consider the following 1377-residue polypeptide: DNA-directed RNA polymerase subunit beta' (1377 aa).

Residues Cys-60, Cys-62, Cys-75, and Cys-78 each contribute to the Zn(2+) site. Residues Asp-449, Asp-451, and Asp-453 each contribute to the Mg(2+) site. Cys-777, Cys-851, Cys-858, and Cys-861 together coordinate Zn(2+).

This sequence belongs to the RNA polymerase beta' chain family. The RNAP catalytic core consists of 2 alpha, 1 beta, 1 beta' and 1 omega subunit. When a sigma factor is associated with the core the holoenzyme is formed, which can initiate transcription. Mg(2+) serves as cofactor. The cofactor is Zn(2+).

The catalysed reaction is RNA(n) + a ribonucleoside 5'-triphosphate = RNA(n+1) + diphosphate. Its function is as follows. DNA-dependent RNA polymerase catalyzes the transcription of DNA into RNA using the four ribonucleoside triphosphates as substrates. This is DNA-directed RNA polymerase subunit beta' from Borreliella burgdorferi (strain ATCC 35210 / DSM 4680 / CIP 102532 / B31) (Borrelia burgdorferi).